Consider the following 342-residue polypeptide: Phenylalanine--tRNA ligase alpha subunit (342 aa).

Glutamate 257 lines the Mg(2+) pocket.

The protein belongs to the class-II aminoacyl-tRNA synthetase family. Phe-tRNA synthetase alpha subunit type 1 subfamily. In terms of assembly, tetramer of two alpha and two beta subunits. Mg(2+) serves as cofactor.

It is found in the cytoplasm. It catalyses the reaction tRNA(Phe) + L-phenylalanine + ATP = L-phenylalanyl-tRNA(Phe) + AMP + diphosphate + H(+). The sequence is that of Phenylalanine--tRNA ligase alpha subunit (pheS) from Chlamydia trachomatis serovar D (strain ATCC VR-885 / DSM 19411 / UW-3/Cx).